Here is a 671-residue protein sequence, read N- to C-terminus: DNA ligase (671 aa).

Residues 32 to 36 (DAEYD), 81 to 82 (SL), and E113 each bind NAD(+). Catalysis depends on K115, which acts as the N6-AMP-lysine intermediate. NAD(+) is bound by residues R136, E173, K290, and K314. Positions 408, 411, 426, and 432 each coordinate Zn(2+). One can recognise a BRCT domain in the interval 593-671 (EIDSPFAGKT…EAEMIRLLDA (79 aa)).

Belongs to the NAD-dependent DNA ligase family. LigA subfamily. Mg(2+) serves as cofactor. The cofactor is Mn(2+).

The catalysed reaction is NAD(+) + (deoxyribonucleotide)n-3'-hydroxyl + 5'-phospho-(deoxyribonucleotide)m = (deoxyribonucleotide)n+m + AMP + beta-nicotinamide D-nucleotide.. In terms of biological role, DNA ligase that catalyzes the formation of phosphodiester linkages between 5'-phosphoryl and 3'-hydroxyl groups in double-stranded DNA using NAD as a coenzyme and as the energy source for the reaction. It is essential for DNA replication and repair of damaged DNA. The chain is DNA ligase from Salmonella schwarzengrund (strain CVM19633).